Reading from the N-terminus, the 162-residue chain is SsrA-binding protein (162 aa).

Basic and acidic residues predominate over residues 137 to 154 (HDKREDTKAREWDREKAR). Positions 137–162 (HDKREDTKAREWDREKARIMKNKHRG) are disordered.

Belongs to the SmpB family.

The protein localises to the cytoplasm. Its function is as follows. Required for rescue of stalled ribosomes mediated by trans-translation. Binds to transfer-messenger RNA (tmRNA), required for stable association of tmRNA with ribosomes. tmRNA and SmpB together mimic tRNA shape, replacing the anticodon stem-loop with SmpB. tmRNA is encoded by the ssrA gene; the 2 termini fold to resemble tRNA(Ala) and it encodes a 'tag peptide', a short internal open reading frame. During trans-translation Ala-aminoacylated tmRNA acts like a tRNA, entering the A-site of stalled ribosomes, displacing the stalled mRNA. The ribosome then switches to translate the ORF on the tmRNA; the nascent peptide is terminated with the 'tag peptide' encoded by the tmRNA and targeted for degradation. The ribosome is freed to recommence translation, which seems to be the essential function of trans-translation. This Aeromonas salmonicida (strain A449) protein is SsrA-binding protein.